We begin with the raw amino-acid sequence, 249 residues long: Probable transcriptional regulatory protein Dtur_1615 (249 aa).

The protein belongs to the TACO1 family.

The protein resides in the cytoplasm. This chain is Probable transcriptional regulatory protein Dtur_1615, found in Dictyoglomus turgidum (strain DSM 6724 / Z-1310).